The primary structure comprises 140 residues: 3-hydroxyacyl-[acyl-carrier-protein] dehydratase FabZ (140 aa).

Residue H47 is part of the active site.

It belongs to the thioester dehydratase family. FabZ subfamily.

The protein resides in the cytoplasm. The catalysed reaction is a (3R)-hydroxyacyl-[ACP] = a (2E)-enoyl-[ACP] + H2O. Its function is as follows. Involved in unsaturated fatty acids biosynthesis. Catalyzes the dehydration of short chain beta-hydroxyacyl-ACPs and long chain saturated and unsaturated beta-hydroxyacyl-ACPs. The chain is 3-hydroxyacyl-[acyl-carrier-protein] dehydratase FabZ from Streptococcus sanguinis (strain SK36).